A 317-amino-acid polypeptide reads, in one-letter code: Transaldolase (317 aa).

Residue K132 is the Schiff-base intermediate with substrate of the active site.

Belongs to the transaldolase family. Type 1 subfamily. Homodimer.

Its subcellular location is the cytoplasm. The enzyme catalyses D-sedoheptulose 7-phosphate + D-glyceraldehyde 3-phosphate = D-erythrose 4-phosphate + beta-D-fructose 6-phosphate. The protein operates within carbohydrate degradation; pentose phosphate pathway; D-glyceraldehyde 3-phosphate and beta-D-fructose 6-phosphate from D-ribose 5-phosphate and D-xylulose 5-phosphate (non-oxidative stage): step 2/3. Transaldolase is important for the balance of metabolites in the pentose-phosphate pathway. This is Transaldolase from Haemophilus influenzae (strain PittGG).